The primary structure comprises 593 residues: UvrABC system protein C (593 aa).

Positions 17–94 (MEPGCYLMKD…IKQYQPRYNI (78 aa)) constitute a GIY-YIG domain. The 36-residue stretch at 199–234 (KTILKSLEERMLTASESLDFERAKEYRDLIQHIQNL) folds into the UVR domain.

The protein belongs to the UvrC family. In terms of assembly, interacts with UvrB in an incision complex.

The protein localises to the cytoplasm. The UvrABC repair system catalyzes the recognition and processing of DNA lesions. UvrC both incises the 5' and 3' sides of the lesion. The N-terminal half is responsible for the 3' incision and the C-terminal half is responsible for the 5' incision. The chain is UvrABC system protein C from Staphylococcus aureus (strain bovine RF122 / ET3-1).